Consider the following 388-residue polypeptide: Chorismate synthase (388 aa).

Arg39 and Arg45 together coordinate NADP(+). FMN contacts are provided by residues 130-132 (RSS), 251-252 (NA), Gly296, 311-315 (KPIPT), and Arg337.

Belongs to the chorismate synthase family. As to quaternary structure, homotetramer. Requires FMNH2 as cofactor.

The enzyme catalyses 5-O-(1-carboxyvinyl)-3-phosphoshikimate = chorismate + phosphate. Its pathway is metabolic intermediate biosynthesis; chorismate biosynthesis; chorismate from D-erythrose 4-phosphate and phosphoenolpyruvate: step 7/7. Its function is as follows. Catalyzes the anti-1,4-elimination of the C-3 phosphate and the C-6 proR hydrogen from 5-enolpyruvylshikimate-3-phosphate (EPSP) to yield chorismate, which is the branch point compound that serves as the starting substrate for the three terminal pathways of aromatic amino acid biosynthesis. This reaction introduces a second double bond into the aromatic ring system. In Streptococcus pneumoniae serotype 19F (strain G54), this protein is Chorismate synthase.